The sequence spans 771 residues: 5-methyltetrahydropteroyltriglutamate--homocysteine methyltransferase (771 aa).

5-methyltetrahydropteroyltri-L-glutamate is bound by residues 16-19 (RELK) and K117. L-homocysteine is bound by residues 443–445 (IGS) and E496. Residues 443 to 445 (IGS) and E496 each bind L-methionine. Residues 527 to 528 (RC) and W573 each bind 5-methyltetrahydropteroyltri-L-glutamate. D611 serves as a coordination point for L-homocysteine. Position 611 (D611) interacts with L-methionine. E617 is a binding site for 5-methyltetrahydropteroyltri-L-glutamate. 3 residues coordinate Zn(2+): H653, C655, and E677. Residue H706 is the Proton donor of the active site. Residue C738 coordinates Zn(2+).

Belongs to the vitamin-B12 independent methionine synthase family. Zn(2+) is required as a cofactor.

The enzyme catalyses 5-methyltetrahydropteroyltri-L-glutamate + L-homocysteine = tetrahydropteroyltri-L-glutamate + L-methionine. The protein operates within amino-acid biosynthesis; L-methionine biosynthesis via de novo pathway; L-methionine from L-homocysteine (MetE route): step 1/1. Functionally, catalyzes the transfer of a methyl group from 5-methyltetrahydrofolate to homocysteine resulting in methionine formation. This is 5-methyltetrahydropteroyltriglutamate--homocysteine methyltransferase from Stutzerimonas stutzeri (strain A1501) (Pseudomonas stutzeri).